A 418-amino-acid polypeptide reads, in one-letter code: Protease LasA (418 aa).

The N-terminal stretch at 1–31 is a signal peptide; that stretch reads MQHKRSRAMASPRSPFLFVLLALAVGGTANA. Residues 32–236 constitute a propeptide that is removed on maturation; sequence HDDGLPAFRY…ARQLQAKAAL (205 aa). The Zn(2+) site is built by histidine 259 and aspartate 272. Cysteine 301 and cysteine 347 are joined by a disulfide. Residues histidine 317 and histidine 356 each act as proton donor/acceptor in the active site. Residue histidine 358 participates in Zn(2+) binding. Cysteine 391 and cysteine 406 are disulfide-bonded.

It belongs to the peptidase M23A family. It depends on Zn(2+) as a cofactor. Post-translationally, processing of pro-LasA can occur extracellularly and requires elastase (lasB). Secretion and processing may be linked.

The protein localises to the secreted. Functionally, involved in proteolysis and elastolysis (degradation of the host protein elastin). Has staphylolytic activity (degrades pentaglycine cross-links in cell wall peptidoglycan), preferring Gly-Gly-|-X substrates where X is Ala or Gly. Enhances the elastolytic but not proteolytic activity of elastase (lasB) and elastolytic activity of other proteases. Degradation of host elastin is likely to contribute to the pathogenicity of P.aeruginosa. While either His-317 or His-356 can abstract a proton in the hydrolysis reaction, the same residue performs both functions in a given catalytic cycle, with the other stabilizing the catalytic intermediate. The protein is Protease LasA (lasA) of Pseudomonas aeruginosa (strain ATCC 15692 / DSM 22644 / CIP 104116 / JCM 14847 / LMG 12228 / 1C / PRS 101 / PAO1).